An 861-amino-acid chain; its full sequence is Linoleate 9S-lipoxygenase 2 (861 aa).

A PLAT domain is found at 29–160 (NALDFTDLAG…RYKSDRIFFV (132 aa)). Residues 163–861 (PYLPSKTPEL…GKGIPNSVSI (699 aa)) form the Lipoxygenase domain. Residues 212–246 (EGKENVRTTLGGSAEYPYPRRGRTGRPPTRTDPKS) are disordered. Fe cation contacts are provided by His-522, His-527, His-713, Asn-717, and Ile-861.

It belongs to the lipoxygenase family. In terms of assembly, monomer. Requires Fe cation as cofactor. Highly expressed in tubers and roots. Detected in flower buds and leaves.

The protein localises to the cytoplasm. It carries out the reaction (9Z,12Z)-octadecadienoate + O2 = (9S)-hydroperoxy-(10E,12Z)-octadecadienoate. The protein operates within lipid metabolism; oxylipin biosynthesis. Its function is as follows. Plant lipoxygenases may be involved in a number of diverse aspects of plant physiology including growth and development, pest resistance, and senescence or responses to wounding. Catalyzes the hydroperoxidation of lipids containing a cis,cis-1,4-pentadiene structure. Linoleic acid is the preferred substrate, but is also active with linolenic and arachidonic acids. This Solanum tuberosum (Potato) protein is Linoleate 9S-lipoxygenase 2 (LOX1.2).